The sequence spans 293 residues: Bifunctional protein FolD (293 aa).

NADP(+) is bound by residues 166–168 (GAS) and isoleucine 232.

Belongs to the tetrahydrofolate dehydrogenase/cyclohydrolase family. Homodimer.

The enzyme catalyses (6R)-5,10-methylene-5,6,7,8-tetrahydrofolate + NADP(+) = (6R)-5,10-methenyltetrahydrofolate + NADPH. It carries out the reaction (6R)-5,10-methenyltetrahydrofolate + H2O = (6R)-10-formyltetrahydrofolate + H(+). The protein operates within one-carbon metabolism; tetrahydrofolate interconversion. Functionally, catalyzes the oxidation of 5,10-methylenetetrahydrofolate to 5,10-methenyltetrahydrofolate and then the hydrolysis of 5,10-methenyltetrahydrofolate to 10-formyltetrahydrofolate. This is Bifunctional protein FolD from Yersinia enterocolitica serotype O:8 / biotype 1B (strain NCTC 13174 / 8081).